The sequence spans 235 residues: Small heat shock protein, chloroplastic (235 aa).

Disordered stretches follow at residues 1-23 (MAYTSLTSSPLVSNVSVGGTSKI) and 51-80 (TGDNKDTSVDVHHSSAQGGNNQGTAVERRP). The span at 52–63 (GDNKDTSVDVHH) shows a compositional bias: basic and acidic residues. Residues 64–74 (SSAQGGNNQGT) show a composition bias toward polar residues. The region spanning 126–235 (SGTGEIRTPW…EKKVIDVQIN (110 aa)) is the sHSP domain.

Belongs to the small heat shock protein (HSP20) family. In terms of tissue distribution, in fruits, flowers, leaves, and stems.

The protein localises to the plastid. It is found in the chloroplast. The sequence is that of Small heat shock protein, chloroplastic (HSP21) from Solanum lycopersicum (Tomato).